The chain runs to 155 residues: Non-secretory ribonuclease (155 aa).

The first 25 residues, methionine 1–cysteine 25, serve as a signal peptide directing secretion. Lysine 33 is a binding site for substrate. Histidine 38 serves as the catalytic Proton acceptor. A glycan (N-linked (GlcNAc...) asparagine) is linked at asparagine 41. Cystine bridges form between cysteine 47–cysteine 106, cysteine 61–cysteine 118, cysteine 79–cysteine 133, and cysteine 86–cysteine 94. At tyrosine 57 the chain carries 3'-nitrotyrosine. Lysine 62–threonine 66 contacts substrate. Asparagine 83, asparagine 88, and asparagine 107 each carry an N-linked (GlcNAc...) asparagine glycan. Catalysis depends on histidine 150, which acts as the Proton donor.

It belongs to the pancreatic ribonuclease family. Interacts with and forms a tight 1:1 complex with RNH1. Dimerization of two such complexes may occur.

It is found in the lysosome. The protein resides in the cytoplasmic granule. It carries out the reaction an [RNA] containing cytidine + H2O = an [RNA]-3'-cytidine-3'-phosphate + a 5'-hydroxy-ribonucleotide-3'-[RNA].. The enzyme catalyses an [RNA] containing uridine + H2O = an [RNA]-3'-uridine-3'-phosphate + a 5'-hydroxy-ribonucleotide-3'-[RNA].. In terms of biological role, this is a non-secretory ribonuclease. It is a pyrimidine specific nuclease with a slight preference for U. Cytotoxin and helminthotoxin. Possesses a wide variety of biological activities. The polypeptide is Non-secretory ribonuclease (Rnase2) (Mus musculus (Mouse)).